The sequence spans 1113 residues: Carbamoyl phosphate synthase large chain (1113 aa).

Residues 1–407 are carboxyphosphate synthetic domain; sequence MPKRSDINHV…ALNKALRSLE (407 aa). The ATP site is built by Arg134, Arg174, Gly180, Gly181, Glu213, Ile215, Glu220, Gly246, Val247, His248, Gln290, and Glu304. One can recognise an ATP-grasp 1 domain in the interval 138-333; it reads KDIVTTIGGE…IAKMAAKLAI (196 aa). Residues Gln290, Glu304, and Asn306 each coordinate Mg(2+). Residues Gln290, Glu304, and Asn306 each coordinate Mn(2+). Residues 408-565 form an oligomerization domain region; it reads TKQQGFWTKP…ELDPAAESEV (158 aa). The segment at 566-967 is carbamoyl phosphate synthetic domain; the sequence is APQTEREKVL…AYAKAEAGAF (402 aa). The 192-residue stretch at 695–886 folds into the ATP-grasp 2 domain; it reads GALLNREQLP…LAKAASRIAV (192 aa). Positions 731, 770, 772, 777, 802, 803, 804, 805, 845, and 857 each coordinate ATP. Gln845, Glu857, and Asn859 together coordinate Mg(2+). 3 residues coordinate Mn(2+): Gln845, Glu857, and Asn859. An MGS-like domain is found at 968-1113; the sequence is GALPTEGTVF…LQELDHAVKA (146 aa). Positions 968-1113 are allosteric domain; that stretch reads GALPTEGTVF…LQELDHAVKA (146 aa).

This sequence belongs to the CarB family. As to quaternary structure, composed of two chains; the small (or glutamine) chain promotes the hydrolysis of glutamine to ammonia, which is used by the large (or ammonia) chain to synthesize carbamoyl phosphate. Tetramer of heterodimers (alpha,beta)4. Requires Mg(2+) as cofactor. Mn(2+) serves as cofactor.

It catalyses the reaction hydrogencarbonate + L-glutamine + 2 ATP + H2O = carbamoyl phosphate + L-glutamate + 2 ADP + phosphate + 2 H(+). The catalysed reaction is hydrogencarbonate + NH4(+) + 2 ATP = carbamoyl phosphate + 2 ADP + phosphate + 2 H(+). It functions in the pathway amino-acid biosynthesis; L-arginine biosynthesis; carbamoyl phosphate from bicarbonate: step 1/1. The protein operates within pyrimidine metabolism; UMP biosynthesis via de novo pathway; (S)-dihydroorotate from bicarbonate: step 1/3. In terms of biological role, large subunit of the glutamine-dependent carbamoyl phosphate synthetase (CPSase). CPSase catalyzes the formation of carbamoyl phosphate from the ammonia moiety of glutamine, carbonate, and phosphate donated by ATP, constituting the first step of 2 biosynthetic pathways, one leading to arginine and/or urea and the other to pyrimidine nucleotides. The large subunit (synthetase) binds the substrates ammonia (free or transferred from glutamine from the small subunit), hydrogencarbonate and ATP and carries out an ATP-coupled ligase reaction, activating hydrogencarbonate by forming carboxy phosphate which reacts with ammonia to form carbamoyl phosphate. The sequence is that of Carbamoyl phosphate synthase large chain from Corynebacterium glutamicum (strain ATCC 13032 / DSM 20300 / JCM 1318 / BCRC 11384 / CCUG 27702 / LMG 3730 / NBRC 12168 / NCIMB 10025 / NRRL B-2784 / 534).